A 595-amino-acid chain; its full sequence is Guanylate-binding protein 3 (595 aa).

The tract at residues 1–309 (MAPEIHMTGP…NAISRGDLPC (309 aa)) is GTPase domain (Globular). In terms of domain architecture, GB1/RHD3-type G spans 35–276 (TQPVVVVAIV…FCSYIFSNSK (242 aa)). GTP contacts are provided by residues 45-52 (GLYRTGKS), 67-69 (LGS), and 97-101 (DTEGL). Residues 482 to 595 (EKEKEIEVEC…KRYMSHKLKI (114 aa)) are a coiled coil.

The protein belongs to the TRAFAC class dynamin-like GTPase superfamily. GB1/RHD3 GTPase family. GB1 subfamily. In terms of assembly, heterodimer with other family members, including GBP1, GBP2 and GBP5. Dimerization regulates subcellular location.

The protein localises to the cytoplasm. It is found in the perinuclear region. Its subcellular location is the golgi apparatus membrane. It carries out the reaction GTP + H2O = GDP + phosphate + H(+). Interferon (IFN)-inducible GTPase that plays important roles in innate immunity against a diverse range of bacterial, viral and protozoan pathogens. Hydrolyzes GTP very efficiently; GDP rather than GMP is the major reaction product. Following infection, recruited to the pathogen-containing vacuoles or vacuole-escaped bacteria and acts as a positive regulator of inflammasome assembly by promoting the release of inflammasome ligands from bacteria. Acts by promoting lysis of pathogen-containing vacuoles, releasing pathogens into the cytosol. Following pathogen release in the cytosol, promotes recruitment of proteins that mediate bacterial cytolysis: this liberates ligands that are detected by inflammasomes, such as lipopolysaccharide (LPS) that activates the non-canonical CASP4/CASP11 inflammasome or double-stranded DNA (dsDNA) that activates the AIM2 inflammasome. Exhibits antiviral activity against influenza virus. Its function is as follows. Shows the most prominent antiviral activity in epithelial cells. The sequence is that of Guanylate-binding protein 3 (GBP3) from Homo sapiens (Human).